A 254-amino-acid chain; its full sequence is MSAELNVPIDPSAPACPEPGHKGMDYRDWVRRSYLELVTSNHHSVQALSWRKLYLSRAKLKASSRTSALLSGFAMVAMVEVQLETQYQYPRPLLIAFSACTTVLVAVHLFALLISTCILPNVEAVSNIHNLNSISESPHERMHPYIELAWGFSTVLGILLFLAEVVLLCWIKFLPVDARRQPGPPPGPGSHTGWQAALVSTIIMVPVGLIFVVFTIHFYRSLVRHKTERHNREIEELHKLKVQLDGHERSLQVL.

4 helical membrane passes run 66–83, 94–114, 148–168, and 196–216; these read TSALLSGFAMVAMVEVQL, LIAFSACTTVLVAVHLFALLI, LAWGFSTVLGILLFLAEVVLL, and AALVSTIIMVPVGLIFVVFTI.

Belongs to the Orai family. Oligomerizes in homomeric and heteromeric ORAI complexes. Native CRAC channels most likely consist of hexameric ORAI heteromers, implying that diverse ORAI1, ORAI2 and ORAI3 subunit combinations with distinct biophysical properties can operate in a cell-type specific way. Interacts with STIM1; this regulates channel activity. Interacts with CRACR2A/EFCAB4B.

Its subcellular location is the cell membrane. It catalyses the reaction Ca(2+)(in) = Ca(2+)(out). CRAC channels are regulated by fast Ca(2+)-dependent inactivation (FCDI), a mechanism that limits Ca(2+) influx and cell toxicity. ORAI2 channels display prominent FCDI. Inhibited by lanthanides such as Gd(3+) ions. Functionally, pore-forming subunit of inward rectifying Ca(2+) release-activated Ca(2+) (CRAC) channels. Assembles with ORAI1 and ORAI3 to form hexameric CRAC channels that mediate Ca(2+) influx upon depletion of endoplasmic reticulum Ca(2+) store and channel activation by Ca(2+) sensor STIM1, a process known as store-operated Ca(2+) entry (SOCE). Various pore subunit combinations may account for distinct CRAC channel spatiotemporal and cell-type specific dynamics. ORAI1 mainly contributes to the generation of Ca(2+) plateaus involved in sustained Ca(2+) entry and is dispensable for cytosolic Ca(2+) oscillations, whereas ORAI2 and ORAI3 generate oscillatory patterns. CRAC channels assemble in Ca(2+) signaling microdomains where Ca(2+) influx is coupled to calmodulin and calcineurin signaling and activation of NFAT transcription factors recruited to ORAI1 via AKAP5. CRAC channels are the main pathway for Ca(2+) influx in T cells and promote the immune response to pathogens by activating NFAT-dependent cytokine and chemokine transcription. The protein is Protein orai-2 (ORAI2) of Homo sapiens (Human).